The chain runs to 557 residues: Dihydroxy-acid dehydratase (557 aa).

Aspartate 78 contributes to the Mg(2+) binding site. Cysteine 119 provides a ligand contact to [2Fe-2S] cluster. Positions 120 and 121 each coordinate Mg(2+). Position 121 is an N6-carboxylysine (lysine 121). Residue cysteine 192 coordinates [2Fe-2S] cluster. Residue glutamate 442 participates in Mg(2+) binding. Serine 468 acts as the Proton acceptor in catalysis.

The protein belongs to the IlvD/Edd family. As to quaternary structure, homodimer. The cofactor is [2Fe-2S] cluster. Mg(2+) serves as cofactor.

The catalysed reaction is (2R)-2,3-dihydroxy-3-methylbutanoate = 3-methyl-2-oxobutanoate + H2O. It carries out the reaction (2R,3R)-2,3-dihydroxy-3-methylpentanoate = (S)-3-methyl-2-oxopentanoate + H2O. It participates in amino-acid biosynthesis; L-isoleucine biosynthesis; L-isoleucine from 2-oxobutanoate: step 3/4. Its pathway is amino-acid biosynthesis; L-valine biosynthesis; L-valine from pyruvate: step 3/4. Functions in the biosynthesis of branched-chain amino acids. Catalyzes the dehydration of (2R,3R)-2,3-dihydroxy-3-methylpentanoate (2,3-dihydroxy-3-methylvalerate) into 2-oxo-3-methylpentanoate (2-oxo-3-methylvalerate) and of (2R)-2,3-dihydroxy-3-methylbutanoate (2,3-dihydroxyisovalerate) into 2-oxo-3-methylbutanoate (2-oxoisovalerate), the penultimate precursor to L-isoleucine and L-valine, respectively. This is Dihydroxy-acid dehydratase from Bacillus cereus (strain Q1).